Here is a 370-residue protein sequence, read N- to C-terminus: Apolipoprotein A-V (370 aa).

The N-terminal stretch at M1–A21 is a signal peptide. Phosphoserine is present on S59.

Belongs to the apolipoprotein A1/A4/E family. As to quaternary structure, interacts with GPIHBP1. Interacts with SORL1; this interaction leads to APOA5 internalization and sorting either to lysosomes and degradation, or to the trans-Golgi network.

The protein localises to the secreted. Its subcellular location is the early endosome. It is found in the late endosome. The protein resides in the golgi apparatus. It localises to the trans-Golgi network. Its function is as follows. Minor apolipoprotein mainly associated with HDL and to a lesser extent with VLDL. May also be associated with chylomicrons. Important determinant of plasma triglyceride (TG) levels by both being a potent stimulator of apo-CII lipoprotein lipase (LPL) TG hydrolysis and an inhibitor of the hepatic VLDL-TG production rate (without affecting the VLDL-apoB production rate). Activates poorly lecithin:cholesterol acyltransferase (LCAT) and does not enhance efflux of cholesterol from macrophages. Binds heparin. In Acinonyx jubatus (Cheetah), this protein is Apolipoprotein A-V (APOA5).